The following is a 400-amino-acid chain: Acyl-CoA dehydrogenase FadE26 (400 aa).

Residues 127-130 (IGYS), Thr136, and Ser162 each bind FAD. The active-site Proton acceptor is the Glu247. FAD is bound at residue 380–382 (TNE).

This sequence belongs to the acyl-CoA dehydrogenase family. Heterotetramer (dimer of heterodimers) composed of FadE26 and FadE27. The cofactor is FAD.

It carries out the reaction (25S)-3-oxocholest-4-en-26-oyl-CoA + A = 3-oxo-cholest-4,24-dien-26-oyl-CoA + AH2. It participates in steroid metabolism; cholesterol degradation. Its activity is regulated as follows. Uncompetitively inhibited by high concentration of 3-OCS-CoA. Its function is as follows. Involved in the first cycle of side chain dehydrogenation in the beta-oxidation of cholesterol catabolism. It contributes partly to the virulence by increasing the efficiency of beta-oxidation. Catalyzes the dehydrogenation of acyl-CoA ester side chains of (25S)-3-oxo-cholest-4-en-26-oyl-CoA (3-OCS-CoA) to yield (24E)-3-oxo-cholest-4,24-dien-26-oyl-CoA. Also able to dehydrogenate steroyl-CoA such as 3-oxo-chol-4-en-24-oyl-CoA (3-OCO-CoA) as well as 3-oxo-4-pregnene-20-carboxyl-CoA (3-OPC-CoA). It dehydrogenates only (25S)-OCS-CoA diastereomer. The polypeptide is Acyl-CoA dehydrogenase FadE26 (fadE26) (Mycobacterium tuberculosis (strain ATCC 25618 / H37Rv)).